Reading from the N-terminus, the 610-residue chain is DNA mismatch repair protein MutL (610 aa).

The protein belongs to the DNA mismatch repair MutL/HexB family.

This protein is involved in the repair of mismatches in DNA. It is required for dam-dependent methyl-directed DNA mismatch repair. May act as a 'molecular matchmaker', a protein that promotes the formation of a stable complex between two or more DNA-binding proteins in an ATP-dependent manner without itself being part of a final effector complex. This chain is DNA mismatch repair protein MutL, found in Rickettsia rickettsii (strain Iowa).